The following is a 260-amino-acid chain: MEGGTAHYSPRTVEEVFRDFKGRRAGIIQALTTDVEDFFQQCDPEKQNLCLYGFPNEVWEVNLPAEEVPPELPEPALGINFARDGMQERNWLSLVAVHSDAWLLSVSFYFGSRFGFDRADRKRLFSMINEVPTVYEVVTGNAEKQTKEMPSSANQNGNRSKSNSKMRGLESKSSKTIHAKDEEEGLELEEGEEEEDEDEDEHGETLCGACGDNYASDEFWICCDMCEKWFHGECVKITPARAEHIKHYKCPTCSNKRARP.

Residue methionine 1 is modified to N-acetylmethionine. Positions 142 to 203 (AEKQTKEMPS…EEDEDEDEHG (62 aa)) are disordered. A compositionally biased stretch (polar residues) spans 148-165 (EMPSSANQNGNRSKSNSK). The segment covering 167–181 (RGLESKSSKTIHAKD) has biased composition (basic and acidic residues). Residues 182-202 (EEEGLELEEGEEEEDEDEDEH) show a composition bias toward acidic residues. A PHD-type zinc finger spans residues 204-256 (ETLCGACGDNYASDEFWICCDMCEKWFHGECVKITPARAEHIKHYKCPTCSNK).

The protein belongs to the Alfin family. In terms of assembly, interacts with H3K4me3 and to a lesser extent with H3K4me2. As to expression, ubiquitously expressed.

It is found in the nucleus. In terms of biological role, histone-binding component that specifically recognizes H3 tails trimethylated on 'Lys-4' (H3K4me3), which mark transcription start sites of virtually all active genes. This chain is PHD finger protein ALFIN-LIKE 5 (AL5), found in Arabidopsis thaliana (Mouse-ear cress).